Consider the following 424-residue polypeptide: Serine hydroxymethyltransferase 1 (424 aa).

(6S)-5,6,7,8-tetrahydrofolate-binding positions include Leu125 and 129 to 131; that span reads GHL. Lys234 is modified (N6-(pyridoxal phosphate)lysine).

The protein belongs to the SHMT family. In terms of assembly, homodimer. Pyridoxal 5'-phosphate is required as a cofactor.

The protein localises to the cytoplasm. The enzyme catalyses (6R)-5,10-methylene-5,6,7,8-tetrahydrofolate + glycine + H2O = (6S)-5,6,7,8-tetrahydrofolate + L-serine. It participates in one-carbon metabolism; tetrahydrofolate interconversion. Its pathway is amino-acid biosynthesis; glycine biosynthesis; glycine from L-serine: step 1/1. Its function is as follows. Catalyzes the reversible interconversion of serine and glycine with tetrahydrofolate (THF) serving as the one-carbon carrier. This reaction serves as the major source of one-carbon groups required for the biosynthesis of purines, thymidylate, methionine, and other important biomolecules. Also exhibits THF-independent aldolase activity toward beta-hydroxyamino acids, producing glycine and aldehydes, via a retro-aldol mechanism. The polypeptide is Serine hydroxymethyltransferase 1 (Burkholderia lata (strain ATCC 17760 / DSM 23089 / LMG 22485 / NCIMB 9086 / R18194 / 383)).